Consider the following 787-residue polypeptide: (-)-kolavenyl diphosphate synthase, chloroplastic (787 aa).

Residues 1-47 constitute a chloroplast transit peptide; the sequence is MSFATSLPRPTTTGAAGFGLPLATCISLSVSHSFSPKFGICNNTSLR. Lys-237 provides a ligand contact to substrate. Mg(2+)-binding residues include Asp-368 and Asp-370. Positions 368-371 match the DXDD motif motif; the sequence is DSDD. Position 454 (Lys-454) interacts with substrate.

Belongs to the terpene synthase family. Tpsc subfamily. Mg(2+) serves as cofactor. As to expression, expressed in peltate glandular trichomes of leaves. Highly expressed in the first leaf pair.

The protein resides in the plastid. It localises to the chloroplast. The catalysed reaction is (2E,6E,10E)-geranylgeranyl diphosphate = (-)-kolavenyl diphosphate. With respect to regulation, inhibited by high concentrations of magnesium. In terms of biological role, involved in the biosynthesis of clerodane diterpenoids natural products, including salvinorin A with potent agonistic activity on brain kappa-opioid receptors, thus conferring hallucinogenic properties. Diterpene synthase that catalyzes the formation of (-)-kolavenyl diphosphate from geranylgeranyl diphosphate (GGPP) as the first reaction in salvinorin A biosynthesis. The polypeptide is (-)-kolavenyl diphosphate synthase, chloroplastic (Salvia divinorum (Maria pastora)).